The chain runs to 204 residues: Dual specificity protein phosphatase 18 (204 aa).

In terms of domain architecture, Tyrosine-protein phosphatase spans 19–160 (GLSQITKSLF…LIHYEFQLFG (142 aa)). A sufficient for mitochondrial localization region spans residues 95 to 141 (MKQGRTLLHCAAGVSRSAALCLAYLMKYHVMSLLDAHAWTKSRRPII). Cys-104 acts as the Phosphocysteine intermediate in catalysis.

This sequence belongs to the protein-tyrosine phosphatase family. Non-receptor class dual specificity subfamily.

The protein resides in the cytoplasm. Its subcellular location is the nucleus. The protein localises to the mitochondrion inner membrane. The catalysed reaction is O-phospho-L-tyrosyl-[protein] + H2O = L-tyrosyl-[protein] + phosphate. It catalyses the reaction O-phospho-L-seryl-[protein] + H2O = L-seryl-[protein] + phosphate. The enzyme catalyses O-phospho-L-threonyl-[protein] + H2O = L-threonyl-[protein] + phosphate. Functionally, can dephosphorylate single and diphosphorylated synthetic MAPK peptides, with preference for the phosphotyrosine and diphosphorylated forms over phosphothreonine. In vitro, dephosphorylates p-nitrophenyl phosphate (pNPP). The chain is Dual specificity protein phosphatase 18 (Dusp18) from Rattus norvegicus (Rat).